The chain runs to 396 residues: S-adenosylmethionine synthase (396 aa).

An ATP-binding site is contributed by H16. D18 lines the Mg(2+) pocket. Position 44 (E44) interacts with K(+). 2 residues coordinate L-methionine: E57 and Q100. A flexible loop region spans residues 100–110 (QSPDIAQGVDR). ATP is bound by residues 167–169 (DAK), 233–234 (RF), D242, 248–249 (RK), A265, and K269. Residue D242 participates in L-methionine binding. K273 lines the L-methionine pocket.

The protein belongs to the AdoMet synthase family. In terms of assembly, homotetramer; dimer of dimers. It depends on Mg(2+) as a cofactor. K(+) serves as cofactor.

It localises to the cytoplasm. It carries out the reaction L-methionine + ATP + H2O = S-adenosyl-L-methionine + phosphate + diphosphate. Its pathway is amino-acid biosynthesis; S-adenosyl-L-methionine biosynthesis; S-adenosyl-L-methionine from L-methionine: step 1/1. Catalyzes the formation of S-adenosylmethionine (AdoMet) from methionine and ATP. The overall synthetic reaction is composed of two sequential steps, AdoMet formation and the subsequent tripolyphosphate hydrolysis which occurs prior to release of AdoMet from the enzyme. The polypeptide is S-adenosylmethionine synthase (Paraburkholderia xenovorans (strain LB400)).